The sequence spans 300 residues: Bis(5'-nucleosyl)-tetraphosphatase, symmetrical (300 aa).

Belongs to the Ap4A hydrolase family.

It carries out the reaction P(1),P(4)-bis(5'-adenosyl) tetraphosphate + H2O = 2 ADP + 2 H(+). Its function is as follows. Hydrolyzes diadenosine 5',5'''-P1,P4-tetraphosphate to yield ADP. The polypeptide is Bis(5'-nucleosyl)-tetraphosphatase, symmetrical (Pseudomonas syringae pv. tomato (strain ATCC BAA-871 / DC3000)).